The chain runs to 1132 residues: Mis18-binding protein 1 (1132 aa).

K7 is covalently cross-linked (Glycyl lysine isopeptide (Lys-Gly) (interchain with G-Cter in SUMO2)). S9 carries the phosphoserine modification. K65 participates in a covalent cross-link: Glycyl lysine isopeptide (Lys-Gly) (interchain with G-Cter in SUMO2). Residues S110, S131, S135, S172, and S192 each carry the phosphoserine modification. Positions 123-154 (LRDKQEQPSRNSSLLEPQKSGNNETFTPNRVE) are disordered. Positions 130-150 (PSRNSSLLEPQKSGNNETFTP) are enriched in polar residues. Residues K211 and K262 each participate in a glycyl lysine isopeptide (Lys-Gly) (interchain with G-Cter in SUMO2) cross-link. S299 is subject to Phosphoserine. Positions 306-332 (SERTTEGTSQQKVKEGNGKTVPGETGL) are disordered. Phosphoserine is present on S365. The 87-residue stretch at 383–469 (VQLQEWMIKS…MFGFPENWKE (87 aa)) folds into the SANTA domain. The disordered stretch occupies residues 482 to 518 (EKNREKTKQKQKTGRSVRDIRKSMKNDARENQTDTAQ). Residues 497–513 (SVRDIRKSMKNDARENQ) are compositionally biased toward basic and acidic residues. Glycyl lysine isopeptide (Lys-Gly) (interchain with G-Cter in SUMO2) cross-links involve residues K534, K612, K639, and K647. Position 653 is a phosphothreonine (T653). Residues K727 and K742 each participate in a glycyl lysine isopeptide (Lys-Gly) (interchain with G-Cter in SUMO2) cross-link. The disordered stretch occupies residues 765–798 (HQSSPDLSSEESETEKEIKRKAEVKKTKAGNTKE). S772 and S773 each carry phosphoserine. The segment covering 779-790 (EKEIKRKAEVKK) has biased composition (basic and acidic residues). T821 bears the Phosphothreonine mark. S824 is subject to Phosphoserine. K840 is covalently cross-linked (Glycyl lysine isopeptide (Lys-Gly) (interchain with G-Cter in SUMO2)). S860 carries the post-translational modification Phosphoserine. Positions 875 to 930 (IQDKEWNEKELQKLHCAFASLPKHKPGFWSEVAAAVGSRSPEECQRKYMENPRGKG) constitute an SANT domain. A Glycyl lysine isopeptide (Lys-Gly) (interchain with G-Cter in SUMO2) cross-link involves residue K899. Positions 923 to 957 (MENPRGKGSQKHVTKKKPANSKGQNGKRGDADQKQ) are disordered. The span at 930–941 (GSQKHVTKKKPA) shows a compositional bias: basic residues. Residues K956, K964, and K983 each participate in a glycyl lysine isopeptide (Lys-Gly) (interchain with G-Cter in SUMO2) cross-link. Position 1008 is a phosphoserine (S1008). K1079 participates in a covalent cross-link: Glycyl lysine isopeptide (Lys-Gly) (interchain with G-Cter in SUMO2). At S1086 the chain carries Phosphoserine. 2 positions are modified to phosphothreonine: T1087 and T1089. S1104 and S1116 each carry phosphoserine.

Interacts with SP1. Interacts with MIS18A. Identified in a complex containing MIS18A, OIP5/MIS18B, MIS18BP1, RBBP7 and RBBP4. Interacts with KAT7/HBO1. Interacts (via N-terminus) with FLNA (via N-terminus).

It is found in the nucleus. The protein localises to the chromosome. Its subcellular location is the centromere. Required for recruitment of CENPA to centromeres and normal chromosome segregation during mitosis. This chain is Mis18-binding protein 1 (MIS18BP1), found in Homo sapiens (Human).